Reading from the N-terminus, the 101-residue chain is Urease subunit beta (101 aa).

Belongs to the urease beta subunit family. Heterotrimer of UreA (gamma), UreB (beta) and UreC (alpha) subunits. Three heterotrimers associate to form the active enzyme.

It is found in the cytoplasm. The catalysed reaction is urea + 2 H2O + H(+) = hydrogencarbonate + 2 NH4(+). It participates in nitrogen metabolism; urea degradation; CO(2) and NH(3) from urea (urease route): step 1/1. This is Urease subunit beta from Agrobacterium fabrum (strain C58 / ATCC 33970) (Agrobacterium tumefaciens (strain C58)).